Reading from the N-terminus, the 157-residue chain is GDP-mannose mannosyl hydrolase (157 aa).

Residues 2–3 (FL), F8, and R36 contribute to the substrate site. The region spanning 3-153 (LRQEDFAAVV…SRAYFSPDAP (151 aa)) is the Nudix hydrolase domain. The Mg(2+) site is built by G49, E69, and Q122. The short motif at 50–71 (GRVCKDETLEAAFARLTQAELG) is the Nudix box element.

Belongs to the Nudix hydrolase family. Homodimer. The cofactor is Mg(2+).

It catalyses the reaction GDP-alpha-D-mannose + H2O = D-mannose + GDP + H(+). In terms of biological role, hydrolyzes GDP-mannose. This Salmonella typhi protein is GDP-mannose mannosyl hydrolase.